The primary structure comprises 523 residues: Tyrosine ammonia-lyase (523 aa).

Tyrosine 60 acts as the Proton donor/acceptor in catalysis. Histidine 89 lines the substrate pocket. Positions 149–151 (ASG) form a cross-link, 5-imidazolinone (Ala-Gly). Serine 150 is modified (2,3-didehydroalanine (Ser)). Residues arginine 303 and 432–436 (NAANQ) each bind substrate.

Belongs to the PAL/histidase family. Homotetramer. Post-translationally, contains an active site 4-methylidene-imidazol-5-one (MIO), which is formed autocatalytically by cyclization and dehydration of residues Ala-Ser-Gly.

It carries out the reaction L-tyrosine = (E)-4-coumarate + NH4(+). In terms of biological role, catalyzes the non-oxidative deamination of L-tyrosine. Has very low phenylalanine ammonia-lyase activity (in vitro). This Cereibacter sphaeroides (strain ATCC 17023 / DSM 158 / JCM 6121 / CCUG 31486 / LMG 2827 / NBRC 12203 / NCIMB 8253 / ATH 2.4.1.) (Rhodobacter sphaeroides) protein is Tyrosine ammonia-lyase (hutH).